We begin with the raw amino-acid sequence, 330 residues long: Thioredoxin domain-containing protein 6 (330 aa).

One can recognise a Thioredoxin domain in the interval 11 to 115; that stretch reads QVNISTQELW…QKTILDQLEA (105 aa). The tract at residues 157-303 is NDK; sequence ERTCTLAIIK…LFPSLKFSDK (147 aa). The segment at 300–330 is disordered; that stretch reads FSDKDTEAPQGGEAEATAGPTEALCFPEDVD. Over residues 307–322 the composition is skewed to low complexity; that stretch reads APQGGEAEATAGPTEA.

The protein belongs to the NDK family. Monomer and homodimer. In terms of tissue distribution, detected at very low levels in testis, lung and brain.

Its subcellular location is the cytoplasm. The protein localises to the cytoskeleton. It localises to the cilium axoneme. It is found in the dynein axonemal particle. Functionally, may be a regulator of microtubule physiology. The protein is Thioredoxin domain-containing protein 6 of Homo sapiens (Human).